The following is a 29-amino-acid chain: GLPICGETCVGGTCNTPGCSCSWPVCTRN.

Positions 1-29 form a cross-link, cyclopeptide (Gly-Asn); that stretch reads GLPICGETCVGGTCNTPGCSCSWPVCTRN. Disulfide bonds link C5–C19, C9–C21, and C14–C26.

Post-translationally, this is a cyclic peptide.

Functionally, probably participates in a plant defense mechanism. Has cytotoxic activity against human lymphoma U-937 GTB and human myeloma RPMI-8226/s cell lines. This Viola arvensis (European field pansy) protein is Varv peptide E.